Reading from the N-terminus, the 93-residue chain is Small ribosomal subunit protein uS19 (93 aa).

The interval 1 to 23 is disordered; the sequence is MPRSLKKGPFVDDHLQKKVDAEN. Positions 9-23 are enriched in basic and acidic residues; sequence PFVDDHLQKKVDAEN.

This sequence belongs to the universal ribosomal protein uS19 family.

Protein S19 forms a complex with S13 that binds strongly to the 16S ribosomal RNA. This chain is Small ribosomal subunit protein uS19, found in Nocardioides sp. (strain ATCC BAA-499 / JS614).